The primary structure comprises 308 residues: Aspartate carbamoyltransferase catalytic subunit (308 aa).

Residues arginine 55 and threonine 56 each contribute to the carbamoyl phosphate site. Lysine 83 contributes to the L-aspartate binding site. 3 residues coordinate carbamoyl phosphate: arginine 105, histidine 133, and glutamine 136. The L-aspartate site is built by arginine 166 and arginine 220. 2 residues coordinate carbamoyl phosphate: glycine 261 and proline 262.

Belongs to the aspartate/ornithine carbamoyltransferase superfamily. ATCase family. Heterododecamer (2C3:3R2) of six catalytic PyrB chains organized as two trimers (C3), and six regulatory PyrI chains organized as three dimers (R2).

It carries out the reaction carbamoyl phosphate + L-aspartate = N-carbamoyl-L-aspartate + phosphate + H(+). It functions in the pathway pyrimidine metabolism; UMP biosynthesis via de novo pathway; (S)-dihydroorotate from bicarbonate: step 2/3. Catalyzes the condensation of carbamoyl phosphate and aspartate to form carbamoyl aspartate and inorganic phosphate, the committed step in the de novo pyrimidine nucleotide biosynthesis pathway. The protein is Aspartate carbamoyltransferase catalytic subunit of Chlorobium phaeobacteroides (strain DSM 266 / SMG 266 / 2430).